We begin with the raw amino-acid sequence, 163 residues long: Keratin-associated protein 11-1 (163 aa).

4 tandem repeats follow at residues 111–120, 121–130, 131–140, and 141–150. A 4 X 10 AA approximate repeats region spans residues 111 to 150; sequence CQPLGGISSVCQPVGGISTVCQPVGGVSTVCQPACGVSRT.

Belongs to the PMG family. Expressed in the upper matrix and in the entire hair cortex.

In terms of biological role, in the hair cortex, hair keratin intermediate filaments are embedded in an interfilamentous matrix, consisting of hair keratin-associated proteins (KRTAP), which are essential for the formation of a rigid and resistant hair shaft through their extensive disulfide bond cross-linking with abundant cysteine residues of hair keratins. The matrix proteins include the high-sulfur and high-glycine-tyrosine keratins. This chain is Keratin-associated protein 11-1 (KRTAP11-1), found in Homo sapiens (Human).